A 536-amino-acid polypeptide reads, in one-letter code: MLLLWVSVVAALALAVLAPGAGEQRRRAAKAPNVVLVVSDSFDGRLTFHPGSQVVKLPFINFMKTRGTSFLNAYTNSPICCPSRAAMWSGLFTHLTESWNNFKGLDPNYTTWMDVMERHGYRTQKFGKLDYTSGHHSISNRVEAWTRDVAFLLRQEGRPMVNLIRNRTKVRVMERDWQNTDKAVNWLRKEAINYTEPFVIYLGLNLPHPYPSPSSGENFGSSTFHTSLYWLEKVSHDAIKIPKWSPLSEMHPVDYYSSYTKNCTGRFTKKEIKNIRAFYYAMCAETDAMLGEIILALHQLDLLQKTIVIYSSDHGELAMEHRQFYKMSMYEASAHVPLLMMGPGIKAGLQVSNVVSLVDIYPTMLDIAGIPLPQNLSGYSLLPLSSETFKNEHKVKNLHPPWILSEFHGCNVNASTYMLRTNHWKYIAYSDGASILPQLFDLSSDPDELTNVAVKFPEITYSLDQKLHSIINYPKVSASVHQYNKEQFIKWKQSIGQNYSNVIANLRWHQDWQKEPRKYENAIDQWLKTHMNPRAV.

A signal peptide spans 1–22 (MLLLWVSVVAALALAVLAPGAG). Residues Asp40 and Cys80 each coordinate Ca(2+). Cys80 (nucleophile) is an active-site residue. A 3-oxoalanine (Cys) modification is found at Cys80. Asn108 carries N-linked (GlcNAc...) asparagine glycosylation. Lys128 contributes to the substrate binding site. N-linked (GlcNAc...) asparagine glycans are attached at residues Asn166 and Asn193. His251 is a binding site for substrate. Asn262 carries N-linked (GlcNAc...) asparagine glycosylation. Residues Asp313 and His314 each contribute to the Ca(2+) site. N-linked (GlcNAc...) asparagine glycans are attached at residues Asn375, Asn413, and Asn498.

The protein belongs to the sulfatase family. It depends on Ca(2+) as a cofactor. The conversion to 3-oxoalanine (also known as C-formylglycine, FGly), of a serine or cysteine residue in prokaryotes and of a cysteine residue in eukaryotes, is critical for catalytic activity. Post-translationally, the 75-kDa precursor undergoes proteolytic processing to yield a 23 kDa form. In terms of processing, N-glycosylated with both high mannose and complex type sugars. Expressed at high levels in the placenta and pancreas. Expressed at intermediate levels in the lung, brain, heart, liver and kidney and at low levels in the muscle.

It is found in the secreted. It localises to the lysosome. The catalysed reaction is an aryl sulfate + H2O = a phenol + sulfate + H(+). The enzyme catalyses Hydrolysis of the 2-sulfate groups of the 2-O-sulfo-D-glucuronate residues of chondroitin sulfate, heparin and heparitin sulfate.. Its function is as follows. Catalyzes the hydrolysis of pseudosubstrates such as p-nitrocatechol sulfate and p-nitrophenyl sulfate. Catalyzes the hydrolysis of the 2-sulfate groups of the 2-O-sulfo-D-glucuronate residues of chondroitin sulfate, heparin and heparitin sulfate. Acts selectively on 2-sulfoglucuronate and lacks activity against 2-sulfoiduronate. The chain is Arylsulfatase K (ARSK) from Homo sapiens (Human).